The primary structure comprises 139 residues: uncharacterized protein (139 aa).

This sequence to E.coli YecT.

This is an uncharacterized protein from Rhizobium meliloti (strain 1021) (Ensifer meliloti).